The sequence spans 454 residues: Ribosomal protein uS12 methylthiotransferase RimO (454 aa).

An MTTase N-terminal domain is found at 14–125 (SKVAFSHVGC…IAKVLDRVEQ (112 aa)). [4Fe-4S] cluster is bound by residues Cys-23, Cys-59, Cys-88, Cys-163, Cys-167, and Cys-170. The Radical SAM core domain occupies 149–378 (DKNKFVAYLR…ISVQQNISKD (230 aa)). Residues 381–452 (QTYVGSKMKI…EYDLYGEIIK (72 aa)) form the TRAM domain.

The protein belongs to the methylthiotransferase family. RimO subfamily. [4Fe-4S] cluster serves as cofactor.

The protein resides in the cytoplasm. The catalysed reaction is L-aspartate(89)-[ribosomal protein uS12]-hydrogen + (sulfur carrier)-SH + AH2 + 2 S-adenosyl-L-methionine = 3-methylsulfanyl-L-aspartate(89)-[ribosomal protein uS12]-hydrogen + (sulfur carrier)-H + 5'-deoxyadenosine + L-methionine + A + S-adenosyl-L-homocysteine + 2 H(+). Its function is as follows. Catalyzes the methylthiolation of an aspartic acid residue of ribosomal protein uS12. The protein is Ribosomal protein uS12 methylthiotransferase RimO of Prochlorococcus marinus (strain AS9601).